We begin with the raw amino-acid sequence, 550 residues long: Membrane protein insertase YidC (550 aa).

Residues 6 to 26 (LIVFIVLSFGLLFVWQEYFAP) form a helical membrane-spanning segment. Positions 30-59 (PKPVAAAVQPDGTPAPATARPADSPATGKL) are disordered. 4 helical membrane passes run 360 to 380 (WGWA…PLSA), 430 to 450 (LPIV…LASV), 472 to 492 (ILPA…PPPA), and 504 to 524 (PLAF…YWLV).

This sequence belongs to the OXA1/ALB3/YidC family. Type 1 subfamily. Interacts with the Sec translocase complex via SecD. Specifically interacts with transmembrane segments of nascent integral membrane proteins during membrane integration.

The protein resides in the cell inner membrane. Functionally, required for the insertion and/or proper folding and/or complex formation of integral membrane proteins into the membrane. Involved in integration of membrane proteins that insert both dependently and independently of the Sec translocase complex, as well as at least some lipoproteins. Aids folding of multispanning membrane proteins. The protein is Membrane protein insertase YidC of Laribacter hongkongensis (strain HLHK9).